The primary structure comprises 323 residues: Quinolinate synthase (323 aa).

2 residues coordinate iminosuccinate: histidine 37 and serine 54. A [4Fe-4S] cluster-binding site is contributed by cysteine 99. Residues tyrosine 125–asparagine 127 and serine 142 contribute to the iminosuccinate site. [4Fe-4S] cluster is bound at residue cysteine 185. Iminosuccinate is bound by residues histidine 211–glutamate 213 and threonine 228. Position 278 (cysteine 278) interacts with [4Fe-4S] cluster.

The protein belongs to the quinolinate synthase family. Type 2 subfamily. [4Fe-4S] cluster serves as cofactor.

Its subcellular location is the cytoplasm. The enzyme catalyses iminosuccinate + dihydroxyacetone phosphate = quinolinate + phosphate + 2 H2O + H(+). The protein operates within cofactor biosynthesis; NAD(+) biosynthesis; quinolinate from iminoaspartate: step 1/1. Functionally, catalyzes the condensation of iminoaspartate with dihydroxyacetone phosphate to form quinolinate. The polypeptide is Quinolinate synthase (Trichodesmium erythraeum (strain IMS101)).